Reading from the N-terminus, the 147-residue chain is Large ribosomal subunit protein uL13 (147 aa).

Belongs to the universal ribosomal protein uL13 family. Part of the 50S ribosomal subunit.

Functionally, this protein is one of the early assembly proteins of the 50S ribosomal subunit, although it is not seen to bind rRNA by itself. It is important during the early stages of 50S assembly. The sequence is that of Large ribosomal subunit protein uL13 from Salinispora arenicola (strain CNS-205).